Consider the following 303-residue polypeptide: 34 kDa antigenic protein homolog (303 aa).

A run of 4 helical transmembrane segments spans residues 42 to 62, 77 to 97, 102 to 122, and 134 to 154; these read IAVA…MFTL, TGLP…ALVP, HVTV…SATF, and LWVV…ALLV. Composition is skewed to low complexity over residues 194-207 and 215-255; these read QGAQ…SPGP and GYGS…HQGP. Residues 194 to 303 are disordered; it reads QGAQQAAGLQ…QSSSPGGAPV (110 aa). Residues 256–271 are compositionally biased toward pro residues; the sequence is STPPTGFPSFSPPPPV. The segment covering 274–286 has biased composition (polar residues); sequence GTGSQAGSAPVNY. Residues 287 to 303 show a composition bias toward low complexity; sequence SNPSGGEQSSSPGGAPV.

It to M.paratuberculosis 34 kDa antigenic protein.

It is found in the cell membrane. This is 34 kDa antigenic protein homolog from Mycobacterium bovis (strain ATCC BAA-935 / AF2122/97).